The following is a 336-amino-acid chain: MVADEEAQLHAQAWDHALSYIKPTALSAAVELEIPDILENHGGPMTLSELSAASGCPREPLYRLMRFLIFHGIFTKSDDCYAQSPLSRLFTTENLGPYMLMQATPVTRCPTGLSGEALKTGTSLYLKSIRGEDSWSDPAYGYHMKAFTNAMTAHARLTAAAIVRNYPAAFDGVQSVVDVGSRHGTAIGKLVEAFPWVRGIAFDLPEIVADAPPRKGVDFVGGDMFESVPKADAVMLMWILHDWSDDKCIEILKKCKEAIPANIGKVMIVDAIINEDGEGDEFSGTRLSLDMIMLAVMAQGKERTYKEWVHLLNEAGFSKHTIKNIKAMEFVIEAYP.

Residues Tyr140 and Asp203 each coordinate S-adenosyl-L-methionine. His241 serves as the catalytic Proton acceptor.

Belongs to the class I-like SAM-binding methyltransferase superfamily. Cation-independent O-methyltransferase family. Homodimer. As to expression, expressed in leaves.

It catalyses the reaction genkwanin + S-adenosyl-L-methionine = apigenin 4',7-dimethyl ether + S-adenosyl-L-homocysteine. The enzyme catalyses cirsiliol + S-adenosyl-L-methionine = eupatorin + S-adenosyl-L-homocysteine + H(+). The catalysed reaction is cirsimaritin + S-adenosyl-L-methionine = salvigenin + S-adenosyl-L-homocysteine + H(+). It carries out the reaction scutellarein 7-methyl ether + S-adenosyl-L-methionine = ladanein + S-adenosyl-L-homocysteine + H(+). It catalyses the reaction (2S)-sakuranetin + S-adenosyl-L-methionine = (2S)-naringenin 4',7-dimethyl ether + S-adenosyl-L-homocysteine + H(+). The protein operates within flavonoid metabolism. Its activity is regulated as follows. Substrate inhibition by genkwanin (GENK) at concentrations above 10 mM. Flavonoid 4'-O-methyltransferase involved in the biosynthesis of polymethoxylated flavonoids natural products such as nevadensin and salvigenin, aroma compounds which contribute to the flavor of sweet basil, and exhibit pharmacological activities such as anti-allergic, anti-oxidant, antibacterial, anti-proliferative, and anti-inflammatory effects. Catalyzes S-adenosylmethionine-dependent regioselective 4'-O-methylation of flavonoids; active on various hydroxylated flavonoid substrates, including scutellarein-7-methyl ether (SCU7Me) and, with a lower efficiency, cirsimaritin (CIRM), sakuranetin (NAR7Me), ladanein (LAD) and genkwanin (GENK). The sequence is that of Flavonoid 4'-O-methyltransferase 5 from Ocimum basilicum (Sweet basil).